We begin with the raw amino-acid sequence, 461 residues long: Metacaspase-1 (461 aa).

4 stretches are compositionally biased toward gly residues: residues 1–21 (MSYP…GYGG), 45–66 (QYGG…GYGP), 74–86 (QYGG…GYGP), and 105–119 (PGGQ…GHPG). The disordered stretch occupies residues 1-154 (MSYPGQGGNT…PQGNQAFGGT (154 aa)). 2 stretches are compositionally biased toward low complexity: residues 121-131 (GNQAPPGQYGQ) and 138-148 (HGNHNMPPQGN). Active-site residues include His-252 and Cys-308.

Belongs to the peptidase C14B family.

Involved in cell death (apoptosis). This Yarrowia lipolytica (strain CLIB 122 / E 150) (Yeast) protein is Metacaspase-1 (MCA1).